A 304-amino-acid chain; its full sequence is UDP-3-O-acyl-N-acetylglucosamine deacetylase (304 aa).

3 residues coordinate Zn(2+): histidine 79, histidine 238, and aspartate 242. Histidine 265 functions as the Proton donor in the catalytic mechanism.

This sequence belongs to the LpxC family. Requires Zn(2+) as cofactor.

The enzyme catalyses a UDP-3-O-[(3R)-3-hydroxyacyl]-N-acetyl-alpha-D-glucosamine + H2O = a UDP-3-O-[(3R)-3-hydroxyacyl]-alpha-D-glucosamine + acetate. It functions in the pathway glycolipid biosynthesis; lipid IV(A) biosynthesis; lipid IV(A) from (3R)-3-hydroxytetradecanoyl-[acyl-carrier-protein] and UDP-N-acetyl-alpha-D-glucosamine: step 2/6. Functionally, catalyzes the hydrolysis of UDP-3-O-myristoyl-N-acetylglucosamine to form UDP-3-O-myristoylglucosamine and acetate, the committed step in lipid A biosynthesis. This chain is UDP-3-O-acyl-N-acetylglucosamine deacetylase, found in Laribacter hongkongensis (strain HLHK9).